The chain runs to 695 residues: MAEAPPRRLGLGPPPGDAPRAELVALTAVQSEQGEAGGGGSPRRLGLLGSPLPPGAPLPGPGSGSGSACGQRSSAAHKRYRRLQNWVYNVLERPRGWAFVYHVFIFLLVFSCLVLSVLSTIQEHQELANECLLILEFVMIVVFGLEYIIRVWSAGCCCRYRGWQGRFRFARKPFCVIDFIVFVASVAVIAAGTQGNIFATSALRSMRFLQILRMVRMDRRGGTWKLLGSVVYAHSKELITAWYIGFLVLIFASFLVYLAEKDANSDFSSYADSLWWGTITLTTIGYGDKTPHTWLGRVLAAGFALLGISFFALPAGILGSGFALKVQEQHRQKHFEKRRMPAANLIQAAWRLYSTDTSRAYLTATWYYYDSILPSFRELALLFEHIQRARNGGLRPLEVRRAPVPDGAASRYPPVATCHRPGSASFCPGESSRMGIKDRIRMSSSQKRTGPSKQHLAPPPIPTSPSSEQVGEASSPSKVQKSWSFNDRTRFRASLRLKPRCSTEEGPSEEVAEEKSYQCELTVDDVMPTVKTVIRSVRILKFLVAKRKFKETLRPYDVKDVIEQYSAGHLDMLGRIKSLQARVDQIVGRGPGDRKTREKGDKGPSDTEAVDEISMMGRVVKVEKQVQSIEHKLDLLLGFYSRCLRSGTSASLGTVQVPLFDPDITSDYHSPVDHEDISVSAQTLSISRSVSTNMD.

The interval 1 to 21 is disordered; that stretch reads MAEAPPRRLGLGPPPGDAPRA. Residues 1 to 96 lie on the Cytoplasmic side of the membrane; the sequence is MAEAPPRRLG…VYNVLERPRG (96 aa). Arg-93 contributes to the a 1,2-diacyl-sn-glycero-3-phospho-(1D-myo-inositol-4,5-bisphosphate) binding site. A helical transmembrane segment spans residues 97-118; that stretch reads WAFVYHVFIFLLVFSCLVLSVL. Over 119–129 the chain is Extracellular; it reads STIQEHQELAN. A helical membrane pass occupies residues 130–152; sequence ECLLILEFVMIVVFGLEYIIRVW. The Cytoplasmic segment spans residues 153-168; the sequence is SAGCCCRYRGWQGRFR. The helical transmembrane segment at 169–191 threads the bilayer; it reads FARKPFCVIDFIVFVASVAVIAA. A 1,2-diacyl-sn-glycero-3-phospho-(1D-myo-inositol-4,5-bisphosphate) is bound at residue Lys-172. The Extracellular segment spans residues 192–202; that stretch reads GTQGNIFATSA. The chain crosses the membrane as a helical; Voltage-sensor span at residues 203–223; it reads LRSMRFLQILRMVRMDRRGGT. A 1,2-diacyl-sn-glycero-3-phospho-(1D-myo-inositol-4,5-bisphosphate)-binding residues include Arg-219, Arg-220, Lys-225, and Ser-235. At 224–235 the chain is on the cytoplasmic side; sequence WKLLGSVVYAHS. Residues 236 to 258 traverse the membrane as a helical segment; that stretch reads KELITAWYIGFLVLIFASFLVYL. The Extracellular segment spans residues 259–270; that stretch reads AEKDANSDFSSY. An intramembrane region (pore-forming) is located at residues 271 to 292; sequence ADSLWWGTITLTTIGYGDKTPH. Position 293 (Thr-293) is a topological domain, extracellular. The helical transmembrane segment at 294–322 threads the bilayer; it reads WLGRVLAAGFALLGISFFALPAGILGSGF. Residues 323 to 695 lie on the Cytoplasmic side of the membrane; that stretch reads ALKVQEQHRQ…ISRSVSTNMD (373 aa). Positions 330 and 333 each coordinate a 1,2-diacyl-sn-glycero-3-phospho-(1D-myo-inositol-4,5-bisphosphate). Residues 342–351 are interaction with CALM; the sequence is AANLIQAAWR. The disordered stretch occupies residues 441-483; sequence RMSSSQKRTGPSKQHLAPPPIPTSPSSEQVGEASSPSKVQKSW. Composition is skewed to polar residues over residues 442–452 and 464–483; these read MSSSQKRTGPS and SPSS…QKSW. Residues 535–549 are interaction with CALM; the sequence is RSVRILKFLVAKRKF. Residues 546-650 are C-terminal assembly domain (tetramerization); the sequence is KRKFKETLRP…SRCLRSGTSA (105 aa). Positions 588-608 are disordered; it reads GRGPGDRKTREKGDKGPSDTE. The span at 591–605 shows a compositional bias: basic and acidic residues; that stretch reads PGDRKTREKGDKGPS.

It belongs to the potassium channel family. KQT (TC 1.A.1.15) subfamily. Kv7.4/KCNQ4 sub-subfamily. In terms of assembly, homotetramer. Interacts (via C-terminus) with calmodulin; forms a heterooctameric structure (with 4:4 KCNQ1:CALM stoichiometry); the interaction is calcium-independent, constitutive, participates in the proper assembly of a functional channel. The interaction with calcium-free CALM controls channel trafficking whereas interaction with calcium-bound CALM regulates channel gating. May form a functional heteromultimeric channel with KCNQ3. Interacts with HSP90AB1; promotes cell surface expression of KCNQ4. Expressed in both the inner (IHCs) and the outer hair cells (OHCs) of the cochlea. Reciprocal longitudinal gradients of expression is present in IHCs and OHCs. The strongest expression in IHCs is in the base of the cochlea and in the apex for OHCs. A basal to apical gradient of expression is also present in both type I and type II spiral ganglion cells.

Its subcellular location is the basal cell membrane. The enzyme catalyses K(+)(in) = K(+)(out). With respect to regulation, two molecules of phosphatidylinositol-4,5-bisphosphate (PIP2-I and PIP2-II) are essential to activate KCNQ4 channel by inducing the coupling of the voltage-sensing domain (VSD) and the pore-forming domain (PD). Upon channel activation, PIP2-I and PIP2-II disrupt the VSD-calmodulin/CALM interaction, causing the release of CALM from the VSD which triggers the opening of the gate. Calcium suppresses KCNQ4 channel current through calcium-bound CALM C-terminus. Therefore CALM acts as calcium sensor that controls channel activity. Its function is as follows. Pore-forming subunit of the voltage-gated potassium (Kv) channel involved in the regulation of sensory cells excitability in the cochlea. KCNQ4/Kv7.4 channel is composed of 4 pore-forming subunits assembled as tetramers. Promotes the outflow of potassium ions in the repolarization phase of action potential which plays a role in regulating membrane potential of excitable cells. The channel conducts a slowly activating and deactivating current. Current often shows some inward rectification at positive potentials. Channel may be selectively permeable in vitro to other cations besides potassium, in decreasing order of affinity K(+) = Rb(+) &gt; Cs(+) &gt; Na(+). Important for normal physiological function of inner ear such as sensory perception of sound. The chain is Potassium voltage-gated channel subfamily KQT member 4 from Rattus norvegicus (Rat).